A 144-amino-acid polypeptide reads, in one-letter code: MRVGFVFALLVVSVIVCFNGLTSAESTVVMNNRNPDSINVPISDDITSRNLRASGEERAYAFVDKIKSLFSRPGISQKVESLQKNPAMVKNLEKAALSQKGSSKVRDWFMHMYNNSSKRDKFFILATLVMFPIGVWAVVTNYRR.

The signal sequence occupies residues 1–24 (MRVGFVFALLVVSVIVCFNGLTSA). The short motif at 49-58 (RNLRASGEER) is the RxLR-dEER element. The N-linked (GlcNAc...) asparagine glycan is linked to N115. The chain crosses the membrane as a helical span at residues 122 to 142 (FFILATLVMFPIGVWAVVTNY).

This sequence belongs to the RxLR effector family. Interacts with the C-terminal portions the ER-associated potato NAC transcription factors NTP1 and NTP2.

It is found in the secreted. It localises to the host endoplasmic reticulum membrane. Effector that is required for full virulence. Targets host NTP1 and NTP2 transcription factors and prevents their pathogen-associated molecular pattern (PAMP)-triggered re-localization from the endoplasmic reticulum into the nucleus, where they contribute to prevent disease progression by P.infestans. The protein is RxLR effector protein PITG_03192 of Phytophthora infestans (strain T30-4) (Potato late blight agent).